Consider the following 157-residue polypeptide: Ubiquitin-like protein 4A (157 aa).

Residues 1-76 (MQLTVKALQG…LNLVVKPLEK (76 aa)) form the Ubiquitin-like domain. A Glycyl lysine isopeptide (Lys-Gly) (interchain with G-Cter in ubiquitin) cross-link involves residue Lys48. Phosphoserine is present on Ser90. Residues 96-138 (WQLISKVLARHFSVADASRVLEQLQRDYDRSLSRLTLDDIERL) form a required and sufficient for interaction with BAG6 region.

In terms of assembly, component of the BAG6/BAT3 complex, at least composed of BAG6, UBL4A and GET4/TRC35. Interacts with BAG6; the interaction is direct and required for UBL4A protein stability. Interacts with USP13; may be indirect via BAG6. In terms of processing, polyubiquitinated. Ubiquitination by AMFR and deubiquitination by USP13 may regulate the interaction between the BAG6/BAT3 complex and SGTA and therefore may regulate client proteins fate.

The protein resides in the cytoplasm. Its subcellular location is the cytosol. It is found in the nucleus. As part of a cytosolic protein quality control complex, the BAG6/BAT3 complex, maintains misfolded and hydrophobic patches-containing proteins in a soluble state and participates in their proper delivery to the endoplasmic reticulum or alternatively can promote their sorting to the proteasome where they undergo degradation. The BAG6/BAT3 complex is involved in the post-translational delivery of tail-anchored/type II transmembrane proteins to the endoplasmic reticulum membrane. Recruited to ribosomes, it interacts with the transmembrane region of newly synthesized tail-anchored proteins and together with SGTA and ASNA1 mediates their delivery to the endoplasmic reticulum. Client proteins that cannot be properly delivered to the endoplasmic reticulum are ubiquitinated and sorted to the proteasome. Similarly, the BAG6/BAT3 complex also functions as a sorting platform for proteins of the secretory pathway that are mislocalized to the cytosol either delivering them to the proteasome for degradation or to the endoplasmic reticulum. The BAG6/BAT3 complex also plays a role in the endoplasmic reticulum-associated degradation (ERAD), a quality control mechanism that eliminates unwanted proteins of the endoplasmic reticulum through their retrotranslocation to the cytosol and their targeting to the proteasome. It maintains these retrotranslocated proteins in an unfolded yet soluble state condition in the cytosol to ensure their proper delivery to the proteasome. The polypeptide is Ubiquitin-like protein 4A (Mus musculus (Mouse)).